A 467-amino-acid chain; its full sequence is uncharacterized protein (467 aa).

This is an uncharacterized protein from Acanthamoeba polyphaga (Amoeba).